The chain runs to 306 residues: Pantothenate kinase (306 aa).

90-97 (GSVAVGKS) is an ATP binding site.

This sequence belongs to the prokaryotic pantothenate kinase family.

The protein localises to the cytoplasm. It catalyses the reaction (R)-pantothenate + ATP = (R)-4'-phosphopantothenate + ADP + H(+). The protein operates within cofactor biosynthesis; coenzyme A biosynthesis; CoA from (R)-pantothenate: step 1/5. The protein is Pantothenate kinase (coaA) of Lactococcus lactis subsp. lactis (strain IL1403) (Streptococcus lactis).